Here is a 71-residue protein sequence, read N- to C-terminus: Exodeoxyribonuclease 7 small subunit (71 aa).

This sequence belongs to the XseB family. Heterooligomer composed of large and small subunits.

It is found in the cytoplasm. It catalyses the reaction Exonucleolytic cleavage in either 5'- to 3'- or 3'- to 5'-direction to yield nucleoside 5'-phosphates.. Functionally, bidirectionally degrades single-stranded DNA into large acid-insoluble oligonucleotides, which are then degraded further into small acid-soluble oligonucleotides. The polypeptide is Exodeoxyribonuclease 7 small subunit (Streptococcus equi subsp. zooepidemicus (strain H70)).